Here is a 565-residue protein sequence, read N- to C-terminus: Sulfite reductase [NADPH] hemoprotein beta-component (565 aa).

[4Fe-4S] cluster contacts are provided by cysteine 429, cysteine 435, cysteine 474, and cysteine 478. Cysteine 478 serves as a coordination point for siroheme.

This sequence belongs to the nitrite and sulfite reductase 4Fe-4S domain family. Alpha(8)-beta(8). The alpha component is a flavoprotein, the beta component is a hemoprotein. Siroheme serves as cofactor. The cofactor is [4Fe-4S] cluster.

The enzyme catalyses hydrogen sulfide + 3 NADP(+) + 3 H2O = sulfite + 3 NADPH + 4 H(+). Its pathway is sulfur metabolism; hydrogen sulfide biosynthesis; hydrogen sulfide from sulfite (NADPH route): step 1/1. Component of the sulfite reductase complex that catalyzes the 6-electron reduction of sulfite to sulfide. This is one of several activities required for the biosynthesis of L-cysteine from sulfate. The polypeptide is Sulfite reductase [NADPH] hemoprotein beta-component (Shewanella baltica (strain OS155 / ATCC BAA-1091)).